The sequence spans 899 residues: Semaphorin-1A (899 aa).

Over residues 1-20 (MLNSHNTNHNNNSASNSNYN) the composition is skewed to low complexity. Positions 1-24 (MLNSHNTNHNNNSASNSNYNKGHK) are disordered. At 1-40 (MLNSHNTNHNNNSASNSNYNKGHKMHLKSATAKATIMKHK) the chain is on the cytoplasmic side. Residues 41-61 (LSKFYGYGWMQVFLLLTVLVI) form a helical membrane-spanning segment. At 62–657 (GNQSAWQENI…INAQYTVETL (596 aa)) the chain is on the extracellular side. N-linked (GlcNAc...) asparagine glycans are attached at residues Asn-63, Asn-90, and Asn-117. A Sema domain is found at 74-543 (KLYVELGPED…TDSQVVAIQL (470 aa)). Cystine bridges form between Cys-141–Cys-151 and Cys-169–Cys-178. Asn-187, Asn-207, and Asn-311 each carry an N-linked (GlcNAc...) asparagine glycan. 2 disulfides stabilise this stretch: Cys-288–Cys-402 and Cys-312–Cys-361. N-linked (GlcNAc...) asparagine glycosylation is present at Asn-404. The chain crosses the membrane as a helical span at residues 658 to 678 (VMAVLAGSIFSLLVGFFTGYF). Over 679 to 899 (CGRRCHKDED…PKNCSYIYRD (221 aa)) the chain is Cytoplasmic. Disordered stretches follow at residues 735 to 766 (VLLPQPPPPNKMHSPKNTLRKPPMHQMHQGPN) and 798 to 899 (VMGD…IYRD). Residues 809–827 (FSTTRSVKKAVNNTNTRNR) show a composition bias toward polar residues. Residues 828 to 837 (SLGRARRQPP) show a composition bias toward basic residues. The segment covering 847–876 (SNSPQQQQQQSQQPHSSSGSSPVMSNSSSS) has biased composition (low complexity).

The protein belongs to the semaphorin family. Expressed by subsets of neurons and muscles.

The protein resides in the cell membrane. In terms of biological role, involved in growth cone guidance through its role in axonal repulsion. Function in neurons is essential for adult survival, motor neuron survival, and is important for climbing behavior and activity. This chain is Semaphorin-1A, found in Drosophila melanogaster (Fruit fly).